The sequence spans 99 residues: UPF0729 protein CG18508 (99 aa).

Residues 60 to 99 (PGGKKTENVSDDDAEESENPPLNATAMAAETEVDESKKEI) are disordered. The span at 68–77 (VSDDDAEESE) shows a compositional bias: acidic residues. Serine 69 carries the post-translational modification Phosphoserine.

The protein belongs to the UPF0729 family.

The chain is UPF0729 protein CG18508 from Drosophila melanogaster (Fruit fly).